The sequence spans 475 residues: AP-1 complex subunit mu-1-I (475 aa).

Residues 175 to 473 (KNEAFLDIVE…TQSGDDYTIR (299 aa)) form the MHD domain. The disordered stretch occupies residues 240-262 (ASATTSDNNTETDKKPSITSSSA).

It belongs to the adaptor complexes medium subunit family. In terms of assembly, adaptor protein complex 1 (AP-1) is a heterotetramer composed of two large adaptins (gamma-type subunit APL4 and beta-type subunit APL2), a medium adaptin (mu-type subunit APM1) and a small adaptin (sigma-type subunit APS1). AP-1 interacts with clathrin.

The protein resides in the cytoplasmic vesicle. The protein localises to the clathrin-coated vesicle membrane. It is found in the membrane. Its subcellular location is the clathrin-coated pit. Its function is as follows. Component of the adaptor complexes which link clathrin to receptors in coated vesicles. Clathrin-associated protein complexes are believed to interact with the cytoplasmic tails of membrane proteins, leading to their selection and concentration. The AP-1 complex interacts directly with clathrin. AP57 is probably a subunit of the Golgi membrane adaptor. The polypeptide is AP-1 complex subunit mu-1-I (APM1) (Saccharomyces cerevisiae (strain ATCC 204508 / S288c) (Baker's yeast)).